We begin with the raw amino-acid sequence, 384 residues long: Mitogen-activated protein kinase homolog 1 (384 aa).

The 288-residue stretch at 32 to 319 folds into the Protein kinase domain; that stretch reads YVPIKPIGRG…VMEALQHPYM (288 aa). Residues 38–46 and Lys-61 contribute to the ATP site; that span reads IGRGAYGIV. The active-site Proton acceptor is Asp-158. Position 191 is a phosphothreonine (Thr-191). The TXY signature appears at 191 to 193; that stretch reads TEY. Tyr-193 is modified (phosphotyrosine).

This sequence belongs to the protein kinase superfamily. CMGC Ser/Thr protein kinase family. MAP kinase subfamily. Requires Mg(2+) as cofactor. Post-translationally, dually phosphorylated on Thr-191 and Tyr-193, which activates the enzyme. In terms of tissue distribution, expressed in vegetative organs such as leaf, root, or stem. In the reproductive organs, it is found in the ovary, but not in the stamen.

The enzyme catalyses L-seryl-[protein] + ATP = O-phospho-L-seryl-[protein] + ADP + H(+). It catalyses the reaction L-threonyl-[protein] + ATP = O-phospho-L-threonyl-[protein] + ADP + H(+). Its activity is regulated as follows. Activated by tyrosine and threonine phosphorylation. This chain is Mitogen-activated protein kinase homolog 1 (MPK1), found in Petunia hybrida (Petunia).